The following is a 372-amino-acid chain: Serine proteinase inhibitor 1 (372 aa).

This sequence belongs to the serpin family. Poxviruses subfamily.

It localises to the host cytoplasm. Its function is as follows. Plays a role in mediating viral host range. May act to inhibit a caspase independent form of apoptosis to allow efficient virus replication in infected cells. The protein is Serine proteinase inhibitor 1 (OPG208) of Homo sapiens (Human).